Consider the following 110-residue polypeptide: Putative protein RIG (110 aa).

Expressed predominantly in brain and weakly in heart and lung. Expression is reduced or undetectable in cultured glioma cells, primary glioblastoma cells and malignant glioblastoma tumors.

In terms of biological role, may serve as a molecular marker for or play a role in the malignant progression of glioblastomas. This Homo sapiens (Human) protein is Putative protein RIG (RIG).